Consider the following 102-residue polypeptide: 10 kDa heat shock protein, mitochondrial (102 aa).

At Ala2 the chain carries N-acetylalanine. Lys8 bears the N6-acetyllysine mark. Lys28 carries the N6-succinyllysine modification. Residue Lys40 is modified to N6-acetyllysine; alternate. Lys40, Lys54, and Lys56 each carry N6-malonyllysine; alternate. N6-succinyllysine; alternate is present on residues Lys40, Lys54, Lys56, Lys66, and Lys70. An N6-acetyllysine; alternate mark is found at Lys56, Lys66, and Lys70. At Thr79 the chain carries Phosphothreonine. N6-acetyllysine; alternate is present on residues Lys80 and Lys86. An N6-succinyllysine; alternate mark is found at Lys80 and Lys86. The residue at position 99 (Lys99) is an N6-acetyllysine.

It belongs to the GroES chaperonin family. In terms of assembly, homoheptamer arranged in a ring structure. 2 heptameric Hsp10 rings interact with a Hsp60 tetradecamer in the structure of a back-to-back double heptameric ring to form the symmetrical football complex.

It localises to the mitochondrion matrix. Its function is as follows. Co-chaperonin implicated in mitochondrial protein import and macromolecular assembly. Together with Hsp60, facilitates the correct folding of imported proteins. May also prevent misfolding and promote the refolding and proper assembly of unfolded polypeptides generated under stress conditions in the mitochondrial matrix. The functional units of these chaperonins consist of heptameric rings of the large subunit Hsp60, which function as a back-to-back double ring. In a cyclic reaction, Hsp60 ring complexes bind one unfolded substrate protein per ring, followed by the binding of ATP and association with 2 heptameric rings of the co-chaperonin Hsp10. This leads to sequestration of the substrate protein in the inner cavity of Hsp60 where, for a certain period of time, it can fold undisturbed by other cell components. Synchronous hydrolysis of ATP in all Hsp60 subunits results in the dissociation of the chaperonin rings and the release of ADP and the folded substrate protein. The sequence is that of 10 kDa heat shock protein, mitochondrial (Hspe1) from Rattus norvegicus (Rat).